We begin with the raw amino-acid sequence, 372 residues long: Cytochrome b (372 aa).

The next 4 helical transmembrane spans lie at 25-45 (FGSM…FLAV), 69-90 (WMMQ…YIHM), 105-125 (WLSG…GYVL), and 170-190 (FFAL…LHIM). 2 residues coordinate heme b: His75 and His89. Heme b is bound by residues His174 and His188. Residue His193 participates in a ubiquinone binding. The next 4 membrane-spanning stretches (helical) occupy residues 218–238 (YKDL…ISFL), 280–300 (LGGA…PFTH), 312–332 (FMQL…WTAT), and 339–358 (YTTI…MSNL).

Belongs to the cytochrome b family. As to quaternary structure, the cytochrome bc1 complex contains 3 respiratory subunits (MT-CYB, CYC1 and UQCRFS1), 2 core proteins (UQCRC1 and UQCRC2) and probably 6 low-molecular weight proteins. Requires heme b as cofactor.

Its subcellular location is the mitochondrion inner membrane. In terms of biological role, component of the ubiquinol-cytochrome c reductase complex (complex III or cytochrome b-c1 complex) that is part of the mitochondrial respiratory chain. The b-c1 complex mediates electron transfer from ubiquinol to cytochrome c. Contributes to the generation of a proton gradient across the mitochondrial membrane that is then used for ATP synthesis. In Sanzinia madagascariensis (Madagascar tree boa), this protein is Cytochrome b (MT-CYB).